Consider the following 142-residue polypeptide: MKTFVAKPETVQRDWYVVDATDKTLGRLASEIALRLRGKHKPEYTPHVDTGDYIIVINAEKVAVTGRKAQDKMYYAHSGYPGGLKETNFEKLIAHKPEMVLEKAVKGMLPKGPLGRAMFRKMKVYAGAEHSHAAQQPQVLDI.

This sequence belongs to the universal ribosomal protein uL13 family. Part of the 50S ribosomal subunit.

Its function is as follows. This protein is one of the early assembly proteins of the 50S ribosomal subunit, although it is not seen to bind rRNA by itself. It is important during the early stages of 50S assembly. The sequence is that of Large ribosomal subunit protein uL13 from Alteromonas mediterranea (strain DSM 17117 / CIP 110805 / LMG 28347 / Deep ecotype).